A 155-amino-acid chain; its full sequence is RNA pyrophosphohydrolase (155 aa).

A Nudix hydrolase domain is found at 5 to 147 (KYRPNVAAII…KRQVYRQVIA (143 aa)). The short motif at 42 to 63 (GGIDEGETPLEALHRELLEEIG) is the Nudix box element.

It belongs to the Nudix hydrolase family. RppH subfamily. Requires a divalent metal cation as cofactor.

In terms of biological role, accelerates the degradation of transcripts by removing pyrophosphate from the 5'-end of triphosphorylated RNA, leading to a more labile monophosphorylated state that can stimulate subsequent ribonuclease cleavage. This chain is RNA pyrophosphohydrolase, found in Helicobacter pylori (strain ATCC 700392 / 26695) (Campylobacter pylori).